Consider the following 443-residue polypeptide: Glutamate-rich protein 1 (443 aa).

Lys12 is modified (N6-acetyllysine). The tract at residues 15–333 (QRLFPPVPSG…DASEEDDTIT (319 aa)) is disordered. Basic and acidic residues predominate over residues 42–54 (VTSEKVSQKHAEP). Residues 87-97 (SCGSPENASSG) are compositionally biased toward polar residues. 2 stretches are compositionally biased toward basic residues: residues 109–124 (PKRR…KKFK) and 159–176 (KNKK…RKKA). Residues 205–226 (ACEEDGVDTSEEDPTLAGEEDV) are compositionally biased toward acidic residues. Residues Ser238 and Ser254 each carry the phosphoserine modification. Positions 250–266 (GADASEEDPTPAGEEDV) are enriched in acidic residues. At Thr277 the chain carries Phosphothreonine. Basic and acidic residues predominate over residues 281 to 296 (DLTRAGEEDGKDTREE). Acidic residues predominate over residues 297–332 (DGADASEEDPTWAGEEEGADSGEEDGADASEEDDTI).

In Homo sapiens (Human), this protein is Glutamate-rich protein 1 (ERICH1).